The chain runs to 526 residues: Glutamyl-tRNA(Gln) amidotransferase subunit A, mitochondrial (526 aa).

Catalysis depends on charge relay system residues Lys-76 and Ser-171. Catalysis depends on Ser-195, which acts as the Acyl-ester intermediate.

This sequence belongs to the amidase family. GatA subfamily. In terms of assembly, subunit of the heterotrimeric GatCAB amidotransferase (AdT) complex, composed of A (QRSL1), B (GATB) and C (GATC) subunits.

Its subcellular location is the mitochondrion. It carries out the reaction L-glutamyl-tRNA(Gln) + L-glutamine + ATP + H2O = L-glutaminyl-tRNA(Gln) + L-glutamate + ADP + phosphate + H(+). Functionally, allows the formation of correctly charged Gln-tRNA(Gln) through the transamidation of misacylated Glu-tRNA(Gln) in the mitochondria. The reaction takes place in the presence of glutamine and ATP through an activated gamma-phospho-Glu-tRNA(Gln). In Canis lupus familiaris (Dog), this protein is Glutamyl-tRNA(Gln) amidotransferase subunit A, mitochondrial.